A 254-amino-acid polypeptide reads, in one-letter code: 5-oxoprolinase subunit A (254 aa).

Belongs to the LamB/PxpA family. In terms of assembly, forms a complex composed of PxpA, PxpB and PxpC.

It carries out the reaction 5-oxo-L-proline + ATP + 2 H2O = L-glutamate + ADP + phosphate + H(+). Catalyzes the cleavage of 5-oxoproline to form L-glutamate coupled to the hydrolysis of ATP to ADP and inorganic phosphate. The sequence is that of 5-oxoprolinase subunit A from Burkholderia orbicola (strain MC0-3).